The sequence spans 145 residues: D-aminoacyl-tRNA deacylase (145 aa).

The short motif at 137-138 (GP) is the Gly-cisPro motif, important for rejection of L-amino acids element.

The protein belongs to the DTD family. In terms of assembly, homodimer.

It is found in the cytoplasm. It catalyses the reaction glycyl-tRNA(Ala) + H2O = tRNA(Ala) + glycine + H(+). The enzyme catalyses a D-aminoacyl-tRNA + H2O = a tRNA + a D-alpha-amino acid + H(+). In terms of biological role, an aminoacyl-tRNA editing enzyme that deacylates mischarged D-aminoacyl-tRNAs. Also deacylates mischarged glycyl-tRNA(Ala), protecting cells against glycine mischarging by AlaRS. Acts via tRNA-based rather than protein-based catalysis; rejects L-amino acids rather than detecting D-amino acids in the active site. By recycling D-aminoacyl-tRNA to D-amino acids and free tRNA molecules, this enzyme counteracts the toxicity associated with the formation of D-aminoacyl-tRNA entities in vivo and helps enforce protein L-homochirality. The sequence is that of D-aminoacyl-tRNA deacylase from Francisella tularensis subsp. holarctica (strain FTNF002-00 / FTA).